An 827-amino-acid chain; its full sequence is Stage II sporulation protein E (827 aa).

The next 10 helical transmembrane spans lie at isoleucine 49–phenylalanine 69, glycine 71–glycine 91, valine 116–methionine 136, glycine 142–glutamate 162, glutamine 175–isoleucine 195, threonine 206–valine 226, glycine 247–serine 267, leucine 269–glycine 289, glycine 299–leucine 319, and threonine 320–glutamine 340. Residues glutamate 341 to serine 827 lie on the Cytoplasmic side of the membrane. The 211-residue stretch at serine 594–isoleucine 804 folds into the PPM-type phosphatase domain.

Mn(2+) is required as a cofactor.

The protein resides in the cell membrane. It catalyses the reaction O-phospho-L-seryl-[protein] + H2O = L-seryl-[protein] + phosphate. The catalysed reaction is O-phospho-L-threonyl-[protein] + H2O = L-threonyl-[protein] + phosphate. Normally needed for pro-sigma E processing during sporulation but can be bypassed in vegetative cells. Activates SpoIIAA by dephosphorylation. The sequence is that of Stage II sporulation protein E (spoIIE) from Bacillus subtilis (strain 168).